The sequence spans 477 residues: Glutamate--tRNA ligase (477 aa).

The short motif at 8 to 18 (PSPTGTLHIGT) is the 'HIGH' region element. A 'KMSKS' region motif is present at residues 247 to 251 (KLSKR). Position 250 (Lys-250) interacts with ATP.

Belongs to the class-I aminoacyl-tRNA synthetase family. Glutamate--tRNA ligase type 1 subfamily. Monomer.

It localises to the cytoplasm. It carries out the reaction tRNA(Glu) + L-glutamate + ATP = L-glutamyl-tRNA(Glu) + AMP + diphosphate. Catalyzes the attachment of glutamate to tRNA(Glu) in a two-step reaction: glutamate is first activated by ATP to form Glu-AMP and then transferred to the acceptor end of tRNA(Glu). The polypeptide is Glutamate--tRNA ligase (Synechococcus sp. (strain CC9902)).